The sequence spans 343 residues: Glyceraldehyde-3-phosphate dehydrogenase 1 (343 aa).

NAD(+) is bound by residues 13–14, aspartate 35, arginine 79, and serine 121; that span reads RI. Residues 154-156, threonine 185, 214-215, and arginine 237 contribute to the D-glyceraldehyde 3-phosphate site; these read SCT and TG. The active-site Nucleophile is the cysteine 155. Asparagine 319 provides a ligand contact to NAD(+).

The protein belongs to the glyceraldehyde-3-phosphate dehydrogenase family. In terms of assembly, homotetramer.

Its subcellular location is the cytoplasm. It carries out the reaction D-glyceraldehyde 3-phosphate + phosphate + NAD(+) = (2R)-3-phospho-glyceroyl phosphate + NADH + H(+). It participates in carbohydrate degradation; glycolysis; pyruvate from D-glyceraldehyde 3-phosphate: step 1/5. Functionally, catalyzes the oxidative phosphorylation of glyceraldehyde 3-phosphate (G3P) to 1,3-bisphosphoglycerate (BPG) using the cofactor NAD. The first reaction step involves the formation of a hemiacetal intermediate between G3P and a cysteine residue, and this hemiacetal intermediate is then oxidized to a thioester, with concomitant reduction of NAD to NADH. The reduced NADH is then exchanged with the second NAD, and the thioester is attacked by a nucleophilic inorganic phosphate to produce BPG. The sequence is that of Glyceraldehyde-3-phosphate dehydrogenase 1 (gap1) from Trichormus variabilis (strain ATCC 29413 / PCC 7937) (Anabaena variabilis).